The following is a 194-amino-acid chain: Molybdenum cofactor guanylyltransferase (194 aa).

Residues 12-14 (LAG), K25, N53, D71, and D101 each bind GTP. D101 contacts Mg(2+).

It belongs to the MobA family. In terms of assembly, monomer. It depends on Mg(2+) as a cofactor.

The protein resides in the cytoplasm. It catalyses the reaction Mo-molybdopterin + GTP + H(+) = Mo-molybdopterin guanine dinucleotide + diphosphate. Transfers a GMP moiety from GTP to Mo-molybdopterin (Mo-MPT) cofactor (Moco or molybdenum cofactor) to form Mo-molybdopterin guanine dinucleotide (Mo-MGD) cofactor. This Escherichia coli O6:H1 (strain CFT073 / ATCC 700928 / UPEC) protein is Molybdenum cofactor guanylyltransferase.